Reading from the N-terminus, the 72-residue chain is Translation initiation factor IF-1 (72 aa).

The S1-like domain maps to 1–72 (MTKEEVLEFP…TKGRITYRFK (72 aa)).

The protein belongs to the IF-1 family. Component of the 30S ribosomal translation pre-initiation complex which assembles on the 30S ribosome in the order IF-2 and IF-3, IF-1 and N-formylmethionyl-tRNA(fMet); mRNA recruitment can occur at any time during PIC assembly.

It localises to the cytoplasm. In terms of biological role, one of the essential components for the initiation of protein synthesis. Stabilizes the binding of IF-2 and IF-3 on the 30S subunit to which N-formylmethionyl-tRNA(fMet) subsequently binds. Helps modulate mRNA selection, yielding the 30S pre-initiation complex (PIC). Upon addition of the 50S ribosomal subunit IF-1, IF-2 and IF-3 are released leaving the mature 70S translation initiation complex. In Agrobacterium fabrum (strain C58 / ATCC 33970) (Agrobacterium tumefaciens (strain C58)), this protein is Translation initiation factor IF-1.